The sequence spans 150 residues: UPF0178 protein AZOSEA36080 (150 aa).

It belongs to the UPF0178 family.

The protein is UPF0178 protein AZOSEA36080 of Aromatoleum aromaticum (strain DSM 19018 / LMG 30748 / EbN1) (Azoarcus sp. (strain EbN1)).